The primary structure comprises 194 residues: Small ribosomal subunit protein uS4c (194 aa).

In terms of domain architecture, S4 RNA-binding spans 82 to 143 (MRLDNILFRL…KQRSKALIQD (62 aa)).

It belongs to the universal ribosomal protein uS4 family. In terms of assembly, part of the 30S ribosomal subunit. Contacts protein S5. The interaction surface between S4 and S5 is involved in control of translational fidelity.

It localises to the plastid. The protein localises to the chloroplast. Functionally, one of the primary rRNA binding proteins, it binds directly to 16S rRNA where it nucleates assembly of the body of the 30S subunit. Its function is as follows. With S5 and S12 plays an important role in translational accuracy. This is Small ribosomal subunit protein uS4c (rps4) from Bobartia gladiata (Sword rush-lily).